A 220-amino-acid polypeptide reads, in one-letter code: MNSLISNEVYDVESGLRKVIESAKANFCESVDVAINLNINSSKSDEQVRGCVVLPKGLGREIKVAVFAKGGYLEMAREAMADIVGDEELIEEVKKKQCKLDVDWCLTTPDFMASVSSIAKILGPKGLMPNPKFNTVTFELAKAIKMIKSGQIKFKSDKTGIVHAKIGNIKFSIEDLLENFNAVISAVKQCKPASIKGLYFKDVFIISTMGKSVKVENLNN.

This sequence belongs to the universal ribosomal protein uL1 family. Part of the 50S ribosomal subunit.

Functionally, binds directly to 23S rRNA. The L1 stalk is quite mobile in the ribosome, and is involved in E site tRNA release. Protein L1 is also a translational repressor protein, it controls the translation of the L11 operon by binding to its mRNA. The protein is Large ribosomal subunit protein uL1 of Ehrlichia chaffeensis (strain ATCC CRL-10679 / Arkansas).